The primary structure comprises 793 residues: Serine/threonine-protein kinase CLA4 (793 aa).

The tract at residues 8-27 (RELSESDFQDIGPAPKPPPV) is disordered. The 113-residue stretch at 56–168 (QRKKSGWVSY…WLDSIFSKCP (113 aa)) folds into the PH domain. One can recognise a CRIB domain in the interval 173 to 186 (VSSPTNFTHKVHVG). Disordered regions lie at residues 243–369 (AAAQ…ESPT) and 383–476 (QKQL…RPTM). 3 stretches are compositionally biased toward polar residues: residues 258–276 (TLSS…STPP), 312–337 (GVTT…QSGP), and 355–369 (LGNS…ESPT). Residues 498–776 (FQMIEKAGQG…TEELLHHSFF (279 aa)) enclose the Protein kinase domain. ATP contacts are provided by residues 504–512 (AGQGASGSV) and Lys-545. Residue Asp-644 is the Proton acceptor of the active site.

It belongs to the protein kinase superfamily. STE Ser/Thr protein kinase family. STE20 subfamily.

The enzyme catalyses L-seryl-[protein] + ATP = O-phospho-L-seryl-[protein] + ADP + H(+). It carries out the reaction L-threonyl-[protein] + ATP = O-phospho-L-threonyl-[protein] + ADP + H(+). In terms of biological role, required for hyphal maturation and for septation. This is Serine/threonine-protein kinase CLA4 (CLA4) from Eremothecium gossypii (strain ATCC 10895 / CBS 109.51 / FGSC 9923 / NRRL Y-1056) (Yeast).